We begin with the raw amino-acid sequence, 334 residues long: Dual specificity mitogen-activated protein kinase kinase 6 (334 aa).

Residues 1-11 are compositionally biased toward basic residues; that stretch reads MSQSKGKKRNP. Residues 1-34 are disordered; that stretch reads MSQSKGKKRNPGLKIPKEAFEQPQTSSTPPRDLD. The tract at residues 4–19 is d domain; that stretch reads SKGKKRNPGLKIPKEA. The Protein kinase domain maps to 53–314; sequence LEPIVELGRG…YPELMQHPFF (262 aa). ATP-binding positions include 59–67 and Lys82; that span reads LGRGAYGVV. Asp179 serves as the catalytic Proton acceptor. Phosphoserine; by MAPK3 is present on Ser207. At Thr211 the chain carries Phosphothreonine; by MAPK3. The interval 311–334 is DVD domain; it reads HPFFTLHESKATDVASFVKSILGD.

It belongs to the protein kinase superfamily. STE Ser/Thr protein kinase family. MAP kinase kinase subfamily. As to quaternary structure, dimer. Interacts (via its D domain) with its substrates MAPK11, MAPK12, MAPK13 and MAPK14. Interacts (via its DVD domain) with MAP3Ks activators like MAP3K5/ASK1, MAP3K1/MEKK1, MAP3K2/MEKK2, MAP3K3/MEKK3, MAP3K4/MEKK4, MAP3K7/TAK1, MAP3K11/MLK3 and MAP3K17/TAOK2. Interacts with DCTN1. Interacts with EIF2AK2/PKR. Weakly autophosphorylated. Phosphorylated at Ser-207 and Thr-211 by the majority of M3Ks, such as MAP3K5/ASK1, MAP3K1/MEKK1, MAP3K2/MEKK2, MAP3K3/MEKK3, MAP3K4/MEKK4, MAP3K7/TAK1, MAP3K11/MLK3 and MAP3K17/TAOK2. Post-translationally, in response to genotoxic stress, MAP3K-phosphorylated MAP2K6 is ubiquitinated and degraded by the SCF(FBXO31) complex.

It localises to the nucleus. The protein localises to the cytoplasm. The protein resides in the cytoskeleton. The catalysed reaction is L-seryl-[protein] + ATP = O-phospho-L-seryl-[protein] + ADP + H(+). It catalyses the reaction L-threonyl-[protein] + ATP = O-phospho-L-threonyl-[protein] + ADP + H(+). The enzyme catalyses L-tyrosyl-[protein] + ATP = O-phospho-L-tyrosyl-[protein] + ADP + H(+). Its activity is regulated as follows. Activated by dual phosphorylation on Ser-207 and Thr-211 in response to a variety of cellular stresses, including UV radiation, osmotic shock, hypoxia, inflammatory cytokines, interferon gamma (IFNG), and less often by growth factors. MAP2K6/MKK6 is activated by the majority of M3Ks, such as MAP3K5/ASK1, MAP3K1/MEKK1, MAP3K2/MEKK2, MAP3K3/MEKK3, MAP3K4/MEKK4, MAP3K7/TAK1, MAP3K11/MLK3 and MAP3K17/TAOK2. Dual specificity protein kinase which acts as an essential component of the MAP kinase signal transduction pathway. With MAP3K3/MKK3, catalyzes the concomitant phosphorylation of a threonine and a tyrosine residue in the MAP kinases p38 MAPK11, MAPK12, MAPK13 and MAPK14 and plays an important role in the regulation of cellular responses to cytokines and all kinds of stresses. Especially, MAP2K3/MKK3 and MAP2K6/MKK6 are both essential for the activation of MAPK11 and MAPK13 induced by environmental stress, whereas MAP2K6/MKK6 is the major MAPK11 activator in response to TNF. MAP2K6/MKK6 also phosphorylates and activates PAK6. The p38 MAP kinase signal transduction pathway leads to direct activation of transcription factors. Nuclear targets of p38 MAP kinase include the transcription factors ATF2 and ELK1. Within the p38 MAPK signal transduction pathway, MAP3K6/MKK6 mediates phosphorylation of STAT4 through MAPK14 activation, and is therefore required for STAT4 activation and STAT4-regulated gene expression in response to IL-12 stimulation. The pathway is also crucial for IL-6-induced SOCS3 expression and down-regulation of IL-6-mediated gene induction; and for IFNG-dependent gene transcription. Has a role in osteoclast differentiation through NF-kappa-B transactivation by TNFSF11, and in endochondral ossification and since SOX9 is another likely downstream target of the p38 MAPK pathway. MAP2K6/MKK6 mediates apoptotic cell death in thymocytes. Acts also as a regulator for melanocytes dendricity, through the modulation of Rho family GTPases. This Bos taurus (Bovine) protein is Dual specificity mitogen-activated protein kinase kinase 6 (MAP2K6).